A 429-amino-acid chain; its full sequence is MSNVTVIGTQWGDEGKGKIVDWLASRADIVVRFQGGHNAGHTLVVGDQIYKLSLLPSGLVRGKIGVIGNGVVVDPKALMTEIDRVTAQGLVVTPETLWIAENAPLILPVHGALDRAREAARGDHKIGTTGRGIGPAYEDKVARRAIRICDLAEPETLDWKLDELLLHHNTLLAGLGAETFTKEQLKDFLAEITPRLLPFSCQVWDRLDEARRAGRRILFEGAQAVMLDVDHGTYPFVTSSNTVAAVAASGSGVSPSSVGFVLGIAKAYTTRVGEGPFPTELHDQTGRTLGERGHEFGTVTGRPRRCGWFDAVLIRRAVRVGGVSGIALTKLDVLDGLDEISICVGYELDGQKIETFPSAPGAQTRVKPVYETMPGWKETTAGARSWAELPAQAIKYVRRIEELIEAPVTLLSTSPERDDTILMRDPFED.

GTP-binding positions include 12–18 and 40–42; these read GDEGKGK and GHT. The active-site Proton acceptor is the Asp-13. Positions 13 and 40 each coordinate Mg(2+). Residues 13–16, 38–41, Thr-129, Arg-143, Gln-223, Thr-238, and Arg-302 each bind IMP; these read DEGK and NAGH. His-41 acts as the Proton donor in catalysis. Position 298–304 (298–304) interacts with substrate; the sequence is TVTGRPR. GTP-binding positions include Arg-304, 330-332, and 412-414; these read KLD and STS.

Belongs to the adenylosuccinate synthetase family. As to quaternary structure, homodimer. Requires Mg(2+) as cofactor.

It localises to the cytoplasm. The enzyme catalyses IMP + L-aspartate + GTP = N(6)-(1,2-dicarboxyethyl)-AMP + GDP + phosphate + 2 H(+). It functions in the pathway purine metabolism; AMP biosynthesis via de novo pathway; AMP from IMP: step 1/2. Plays an important role in the de novo pathway of purine nucleotide biosynthesis. Catalyzes the first committed step in the biosynthesis of AMP from IMP. This Gluconobacter oxydans (strain 621H) (Gluconobacter suboxydans) protein is Adenylosuccinate synthetase.